Consider the following 526-residue polypeptide: Cytochrome P450 monooxygenase COX2 (526 aa).

The N-linked (GlcNAc...) asparagine glycan is linked to N11. Residues 12-31 traverse the membrane as a helical segment; that stretch reads ITTNHVAAAVCAGIAVYAIV. N302 carries an N-linked (GlcNAc...) asparagine glycan. C450 is a heme binding site.

This sequence belongs to the cytochrome P450 family. Heme serves as cofactor.

It is found in the membrane. Its pathway is secondary metabolite biosynthesis. Its function is as follows. Cytochrome P450 monooxygenase; part of the gene cluster that mediates the biosynthesis of alpha-cuprenene and oxidized derivatives. The alpha-cuprenene synthase COP6 is the only sesquiterpene synthase identified in C.cinereus that appears to be part of a biosynthetic gene cluster and is highly specific since it catalyzes the cyclization of (2E,6E)-farnesyl diphosphate into only one product, alpha-cuprenene. The cytochrome P450 monooxygenase COX2 then oxidizes the cyclohexadiene ring of alpha-cuprenene at positions 1 and 4, yielding first alpha-cuparene, followed by alpha-cuparophenol and a further yet unidentified compound resulting from one additional oxidation step. The cytochrome P450 monooxygenase COX1 then likely catalyzes the oxidation at position 9 of the pentane ring of alpha-cuprenene to give the corresponding hydroxy or ketone derivatives. In Coprinopsis cinerea (strain Okayama-7 / 130 / ATCC MYA-4618 / FGSC 9003) (Inky cap fungus), this protein is Cytochrome P450 monooxygenase COX2.